The following is a 322-amino-acid chain: Serine protease Lpg1137 (322 aa).

Residue S68 is part of the active site.

It is found in the secreted. The protein localises to the host mitochondrion membrane. Its function is as follows. Serine protease effector that inhibits host cell autophagy by targeting SNX17. Localizes to the host endoplasmic reticulum-mitochondria contact site and catalyzes degradation of host SNX17, thereby impairing endoplasmic reticulum-mitochondria communication, leading to inhibit autophagy as well as staurosporine-induced apoptosis. The protein is Serine protease Lpg1137 of Legionella pneumophila subsp. pneumophila (strain Philadelphia 1 / ATCC 33152 / DSM 7513).